Reading from the N-terminus, the 440-residue chain is Xylose isomerase (440 aa).

Active-site residues include H99 and D102. The Mg(2+) site is built by E230, E266, H269, D294, D305, D307, and D337.

This sequence belongs to the xylose isomerase family. In terms of assembly, homotetramer. The cofactor is Mg(2+).

It localises to the cytoplasm. It catalyses the reaction alpha-D-xylose = alpha-D-xylulofuranose. The sequence is that of Xylose isomerase from Halalkalibacterium halodurans (strain ATCC BAA-125 / DSM 18197 / FERM 7344 / JCM 9153 / C-125) (Bacillus halodurans).